The primary structure comprises 395 residues: NKAP-like protein (395 aa).

2 disordered regions span residues M1 to P77 and C91 to K247. Phosphoserine occurs at positions 23 and 25. Positions S25–S35 are enriched in polar residues. A compositionally biased stretch (basic and acidic residues) spans D109–G130. The residue at position 149 (S149) is a Phosphoserine. Residues D150–N161 are compositionally biased toward basic and acidic residues. 2 stretches are compositionally biased toward basic residues: residues K177–K197 and K214–K238.

This sequence belongs to the NKAP family. As to quaternary structure, interacts with RBPJ, CIR1 and HDAC3. As to expression, specific to testis (at protein level). Detected in differenting spermatogonia and early spermatocytes (at protein level).

It is found in the nucleus. In terms of biological role, transcriptional repressor of Notch-mediated signaling. Required for spermatogenesis. The sequence is that of NKAP-like protein from Mus musculus (Mouse).